The chain runs to 158 residues: Transcription elongation factor GreA (158 aa).

The stretch at 49-69 (SEYESAKDEQAFVEGRISQIE) forms a coiled coil. Residues 102–125 (EEPESYTIVGESESDPLSGKISNE) form a disordered region.

This sequence belongs to the GreA/GreB family.

In terms of biological role, necessary for efficient RNA polymerase transcription elongation past template-encoded arresting sites. The arresting sites in DNA have the property of trapping a certain fraction of elongating RNA polymerases that pass through, resulting in locked ternary complexes. Cleavage of the nascent transcript by cleavage factors such as GreA or GreB allows the resumption of elongation from the new 3'terminus. GreA releases sequences of 2 to 3 nucleotides. The chain is Transcription elongation factor GreA from Limosilactobacillus fermentum (strain NBRC 3956 / LMG 18251) (Lactobacillus fermentum).